Consider the following 590-residue polypeptide: Aspartate--tRNA(Asp/Asn) ligase (590 aa).

E169 is an L-aspartate binding site. Residues 193-196 (QLFK) are aspartate. Residue R215 coordinates L-aspartate. ATP-binding positions include 215-217 (RDE) and Q224. An L-aspartate-binding site is contributed by H447. E479 contributes to the ATP binding site. R486 lines the L-aspartate pocket. 531 to 534 (GWDR) serves as a coordination point for ATP. The segment at 556-590 (GGFDPLTAAPAPITPEQRKEAGVDARPQQDLPPQS) is disordered.

It belongs to the class-II aminoacyl-tRNA synthetase family. Type 1 subfamily. In terms of assembly, homodimer.

It localises to the cytoplasm. It catalyses the reaction tRNA(Asx) + L-aspartate + ATP = L-aspartyl-tRNA(Asx) + AMP + diphosphate. Aspartyl-tRNA synthetase with relaxed tRNA specificity since it is able to aspartylate not only its cognate tRNA(Asp) but also tRNA(Asn). Reaction proceeds in two steps: L-aspartate is first activated by ATP to form Asp-AMP and then transferred to the acceptor end of tRNA(Asp/Asn). The chain is Aspartate--tRNA(Asp/Asn) ligase from Nocardioides sp. (strain ATCC BAA-499 / JS614).